Consider the following 520-residue polypeptide: Ribonuclease Y (520 aa).

Residues 5–25 form a helical membrane-spanning segment; the sequence is ITIISSLLFLIVGLVVGSLIF. Residues 70–127 are disordered; that stretch reads RTEIENELRGRRTETQKAENRLLQREENLDRKDTSLSKREATLERKEESISKRQQQIE. Residues 210-273 form the KH domain; it reads TVSVVTLPND…EIARIALEKL (64 aa). Positions 336 to 429 constitute an HD domain; that stretch reads VLNHSLEVSK…VAAADALSAA (94 aa).

This sequence belongs to the RNase Y family.

Its subcellular location is the cell membrane. Endoribonuclease that initiates mRNA decay. The protein is Ribonuclease Y of Listeria welshimeri serovar 6b (strain ATCC 35897 / DSM 20650 / CCUG 15529 / CIP 8149 / NCTC 11857 / SLCC 5334 / V8).